The sequence spans 296 residues: Small ribosomal subunit biogenesis GTPase RsgA (296 aa).

Residues 65–223 (INRIGRPAVA…LADTPGFSSI (159 aa)) enclose the CP-type G domain. GTP is bound by residues 114 to 117 (SKAD) and 166 to 174 (GQSGAGKST). 4 residues coordinate Zn(2+): Cys-247, Cys-252, His-254, and Cys-260.

This sequence belongs to the TRAFAC class YlqF/YawG GTPase family. RsgA subfamily. As to quaternary structure, monomer. Associates with 30S ribosomal subunit, binds 16S rRNA. The cofactor is Zn(2+).

It localises to the cytoplasm. Functionally, one of several proteins that assist in the late maturation steps of the functional core of the 30S ribosomal subunit. Helps release RbfA from mature subunits. May play a role in the assembly of ribosomal proteins into the subunit. Circularly permuted GTPase that catalyzes slow GTP hydrolysis, GTPase activity is stimulated by the 30S ribosomal subunit. The polypeptide is Small ribosomal subunit biogenesis GTPase RsgA (Lactobacillus acidophilus (strain ATCC 700396 / NCK56 / N2 / NCFM)).